A 449-amino-acid polypeptide reads, in one-letter code: Glycine receptor subunit alpha-2 (449 aa).

The first 27 residues, 1–27 (MTRPSVKLLTTLLACLMEMLNFRVSSG), serve as a signal peptide directing secretion. The Extracellular segment spans residues 28 to 255 (KDPDLLSSSS…FHLERQMGYY (228 aa)). Asn-70 carries an N-linked (GlcNAc...) asparagine glycan. Residues Arg-97 and Ser-161 each coordinate glycine. Arg-97 is a strychnine binding site. A disulfide bond links Cys-170 and Cys-184. Glu-224 and Asp-226 together coordinate Zn(2+). The cysteines at positions 230 and 241 are disulfide-linked. Thr-236 contributes to the glycine binding site. His-247 contributes to the Zn(2+) binding site. The chain crosses the membrane as a helical span at residues 256 to 276 (LIQMYIPSLLIVILSWVSFWI). The Cytoplasmic portion of the chain corresponds to 277-282 (NMDAAP). Residues 283–302 (ARVALGITTVLTMTTQSSGS) form a helical membrane-spanning segment. Topologically, residues 303–313 (RASLPKVSYVK) are extracellular. The helical transmembrane segment at 314–334 (AIDIWMAVCLLFVFAALLEYA) threads the bilayer. Topologically, residues 335-420 (GVNFVSRQQK…RAKRIDTISR (86 aa)) are cytoplasmic. A helical membrane pass occupies residues 421–441 (AAFPLAFLIFNVFYWITYKII). At 442-449 (RHESARKD) the chain is on the extracellular side.

The protein belongs to the ligand-gated ion channel (TC 1.A.9) family.

It localises to the postsynaptic cell membrane. The protein resides in the synapse. Its subcellular location is the cell membrane. The protein localises to the cell projection. The enzyme catalyses chloride(in) = chloride(out). Channel opening is triggered by extracellular glycine. Channel opening is also triggered by taurine and beta-alanine. Inhibited by strychnine. In terms of biological role, subunit of heteromeric glycine-gated chloride channels. Plays a role in synaptic plasticity. Contributes to the generation of inhibitory postsynaptic currents, and is involved in the down-regulation of neuronal excitability. This chain is Glycine receptor subunit alpha-2 (glra2), found in Danio rerio (Zebrafish).